The primary structure comprises 1593 residues: Autotransporter CRAC (1593 aa).

An N-terminal signal peptide occupies residues 1 to 54 (MNKVYNTVWNESTGMWVVTSELTRKGGRRPRQIRRTALAGLIAGLLLPSAPALA). A compositionally biased stretch (polar residues) spans 65–85 (GATSSSMSLNAGDTATDTTIN). Disordered regions lie at residues 65-100 (GATS…SATS) and 1267-1286 (KADS…PVPP). Low complexity predominate over residues 86 to 97 (SGGSQRVSSGGS). Residues 1269–1280 (DSSQPGTDNPGT) show a composition bias toward polar residues. Positions 1325-1593 (NTRSPGGVWG…TGSVGFRINF (269 aa)) constitute an Autotransporter domain.

Glycosylated by heptosyltransferas BAHTCr. Glycosylation is required for adhesion to mammalian cells and colonization of the mouse host gastrointestinal tract.

It is found in the cell outer membrane. In terms of biological role, autotransporter required for the colonization of the mouse host gastrointestinal tract, possibly by mediating bacteria adhesion to host cells. This Citrobacter rodentium (strain ICC168) (Citrobacter freundii biotype 4280) protein is Autotransporter CRAC.